A 64-amino-acid polypeptide reads, in one-letter code: Large ribosomal subunit protein uL29 (64 aa).

This sequence belongs to the universal ribosomal protein uL29 family.

In Legionella pneumophila (strain Lens), this protein is Large ribosomal subunit protein uL29.